A 265-amino-acid polypeptide reads, in one-letter code: MLLAAVSLGLLLLAFLLLLRHLGWGLVAIGWFEFVQQPVHNLLMGGTKEQRILRHVQQHAKPGDPQSVLEAIDTYCSEKEWAMNVGDAKGQIMDAVIREYRPSLVLELGAYCGYSAVRMARLLPPGARLLTMEINPDYAAITQQMLDFAGLQDKVSILIGASQDLIPQLKKKYDVDTLDMVFLDHWKDRYLPDTLLLEECGLLRKGTVLLADNVIVPGTPDFLAYVRGSSSFECTHYSSYLEYMKVVDGLEKAVYQGPGSSPVKS.

At 1 to 2 the chain is on the cytoplasmic side; sequence ML. A helical; Signal-anchor for type II membrane protein membrane pass occupies residues 3-19; sequence LAAVSLGLLLLAFLLLL. Residues 20 to 265 lie on the Extracellular side of the membrane; sequence RHLGWGLVAI…QGPGSSPVKS (246 aa). S-adenosyl-L-methionine-binding positions include Val85, Glu107, Ser115, Glu133, Ile134, 160–163, Ser162, and Asp184; that span reads GASQ. A Mg(2+)-binding site is contributed by Asp184. Lys187 contacts substrate. Residues Asp212 and Asn213 each coordinate Mg(2+). The substrate site is built by Asn213 and Glu242. Residues Ser260, Ser261, and Ser265 each carry the phosphoserine modification.

This sequence belongs to the class I-like SAM-binding methyltransferase superfamily. Cation-dependent O-methyltransferase family. The cofactor is Mg(2+).

The protein resides in the cytoplasm. It localises to the cell membrane. It catalyses the reaction a catechol + S-adenosyl-L-methionine = a guaiacol + S-adenosyl-L-homocysteine + H(+). The enzyme catalyses 2-hydroxyestrone + S-adenosyl-L-methionine = 2-hydroxy-3-methoxy-estrone + S-adenosyl-L-homocysteine + H(+). The catalysed reaction is 4-hydroxyestrone + S-adenosyl-L-methionine = 4-methoxyestrone + S-adenosyl-L-homocysteine + H(+). It carries out the reaction 2-hydroxyestrone + S-adenosyl-L-methionine = 2-methoxyestrone + S-adenosyl-L-homocysteine + H(+). It catalyses the reaction 4-hydroxy-17beta-estradiol + S-adenosyl-L-methionine = 4-methoxy-17beta-estradiol + S-adenosyl-L-homocysteine + H(+). The enzyme catalyses 2-hydroxy-17beta-estradiol + S-adenosyl-L-methionine = 2-hydroxy-3-methoxy-17beta-estradiol + S-adenosyl-L-homocysteine + H(+). The catalysed reaction is 2-hydroxy-17beta-estradiol + S-adenosyl-L-methionine = 2-methoxy-17beta-estradiol + S-adenosyl-L-homocysteine + H(+). Its function is as follows. Catalyzes the O-methylation, and thereby the inactivation, of catecholamine neurotransmitters and catechol hormones. Also shortens the biological half-lives of certain neuroactive drugs, like L-DOPA, alpha-methyl DOPA and isoproterenol. The sequence is that of Catechol O-methyltransferase from Mus musculus (Mouse).